The following is a 617-amino-acid chain: Phosphatidylinositol-3,5-bisphosphate 3-phosphatase MTMR6 (617 aa).

One can recognise a GRAM domain in the interval 1 to 101 (MEHIRTTKVE…YNSLLQLSKQ (101 aa)). The interval 2 to 141 (EHIRTTKVEQ…AEYERMGVPN (140 aa)) is interaction with RAB1B. The residue at position 108 (Y108) is a Phosphotyrosine. The 376-residue stretch at 124–499 (GWQLIDLAAE…FNFKFWRNMY (376 aa)) folds into the Myotubularin phosphatase domain. N248, N273, and I274 together coordinate a 1,2-diacyl-sn-glycero-3-phospho-(1D-myo-inositol-3,5-bisphosphate). N248, N273, and I274 together coordinate a 1,2-diacyl-sn-glycero-3-phospho-(1D-myo-inositol-3-phosphate). Residue C336 is the Phosphocysteine intermediate of the active site. Residues S337, D338, G339, W340, D341, R342, K378, and R382 each coordinate a 1,2-diacyl-sn-glycero-3-phospho-(1D-myo-inositol-3,5-bisphosphate). Positions 337, 338, 339, 340, 341, and 342 each coordinate a 1,2-diacyl-sn-glycero-3-phospho-(1D-myo-inositol-3-phosphate). A 1,2-diacyl-sn-glycero-3-phospho-(1D-myo-inositol-3-phosphate) is bound at residue R382. Phosphoserine occurs at positions 557, 585, and 607.

Belongs to the protein-tyrosine phosphatase family. Non-receptor class myotubularin subfamily. Homodimer. Heterodimer (via C-terminus) with MTMR9 (via C-terminus). Interacts with ALKBH4. Interacts with KCNN4. Interacts (via GRAM domain) with RAB1B (in GDP-bound form); the interaction regulates MTMR6 recruitment to the endoplasmic reticulum-Golgi intermediate compartment. Isoform 1: Ubiquitously expressed including in heart, brain, spleen, lung, liver, muscle, kidney and testis (at protein level). Isoform 2: Expressed in testis (at protein level).

The protein localises to the cytoplasm. Its subcellular location is the endoplasmic reticulum-Golgi intermediate compartment. It is found in the cell projection. The protein resides in the ruffle membrane. It localises to the endoplasmic reticulum. The enzyme catalyses a 1,2-diacyl-sn-glycero-3-phospho-(1D-myo-inositol-3,5-bisphosphate) + H2O = a 1,2-diacyl-sn-glycero-3-phospho-(1D-myo-inositol-5-phosphate) + phosphate. It carries out the reaction a 1,2-diacyl-sn-glycero-3-phospho-(1D-myo-inositol-3-phosphate) + H2O = a 1,2-diacyl-sn-glycero-3-phospho-(1D-myo-inositol) + phosphate. The catalysed reaction is 1,2-dioctanoyl-sn-glycero-3-phospho-(1D-myo-inositol-3,5-bisphosphate) + H2O = 1,2-dioctanoyl-sn-glycero-3-phospho-(1D-myo-inositol-5-phosphate) + phosphate. It catalyses the reaction 1,2-dioctanoyl-sn-glycero-3-phospho-(1-D-myo-inositol-3-phosphate) + H2O = 1,2-dioctanoyl-sn-glycero-3-phospho-(1D-myo-inositol) + phosphate. With respect to regulation, allosterically activated by phosphatidylserine and/or phosphatidylinositol 4-phosphate (PtdIns(4)P), and phosphatidylinositol 5-phosphate (PtdIns(5)P). Interaction with MTMR9 increases catalytic activity towards phosphatidylinositol 3,5-bisphosphate. Functionally, lipid phosphatase that specifically dephosphorylates the D-3 position of phosphatidylinositol 3-phosphate and phosphatidylinositol 3,5-bisphosphate, generating phosphatidylinositol and phosphatidylinositol 5-phosphate. Binds with high affinity to phosphatidylinositol 3,5-bisphosphate (PtdIns(3,5)P2) but also to phosphatidylinositol 3-phosphate (PtdIns(3)P), phosphatidylinositol 4-phosphate (PtdIns(4)P), and phosphatidylinositol 5-phosphate (PtdIns(5)P), phosphatidic acid and phosphatidylserine. Negatively regulates ER-Golgi protein transport. Probably in association with MTMR9, plays a role in the late stages of macropinocytosis by dephosphorylating phosphatidylinositol 3-phosphate in membrane ruffles. Acts as a negative regulator of KCNN4/KCa3.1 channel activity in CD4(+) T-cells possibly by decreasing intracellular levels of phosphatidylinositol 3-phosphate. Negatively regulates proliferation of reactivated CD4(+) T-cells. In complex with MTMR9, negatively regulates DNA damage-induced apoptosis. The formation of the MTMR6-MTMR9 complex stabilizes both MTMR6 and MTMR9 protein levels. The polypeptide is Phosphatidylinositol-3,5-bisphosphate 3-phosphatase MTMR6 (Mus musculus (Mouse)).